Consider the following 128-residue polypeptide: uncharacterized protein (128 aa).

This is an uncharacterized protein from Mycobacterium bovis (strain ATCC BAA-935 / AF2122/97).